The following is a 388-amino-acid chain: Succinate--CoA ligase [ADP-forming] subunit beta (388 aa).

Residues 9-244 enclose the ATP-grasp domain; it reads KALFAEYGLP…PSQDDAREAH (236 aa). ATP-binding positions include Lys-46, 53–55, Glu-99, Thr-102, and Glu-107; that span reads GRG. Residues Asn-199 and Asp-213 each coordinate Mg(2+). Substrate-binding positions include Asn-264 and 321 to 323; that span reads GIV.

It belongs to the succinate/malate CoA ligase beta subunit family. Heterotetramer of two alpha and two beta subunits. Mg(2+) is required as a cofactor.

The catalysed reaction is succinate + ATP + CoA = succinyl-CoA + ADP + phosphate. It catalyses the reaction GTP + succinate + CoA = succinyl-CoA + GDP + phosphate. It participates in carbohydrate metabolism; tricarboxylic acid cycle; succinate from succinyl-CoA (ligase route): step 1/1. Its function is as follows. Succinyl-CoA synthetase functions in the citric acid cycle (TCA), coupling the hydrolysis of succinyl-CoA to the synthesis of either ATP or GTP and thus represents the only step of substrate-level phosphorylation in the TCA. The beta subunit provides nucleotide specificity of the enzyme and binds the substrate succinate, while the binding sites for coenzyme A and phosphate are found in the alpha subunit. This Shewanella amazonensis (strain ATCC BAA-1098 / SB2B) protein is Succinate--CoA ligase [ADP-forming] subunit beta.